Consider the following 95-residue polypeptide: RING finger protein Z (95 aa).

Over residues 1 to 16 (MGNSKSKSNPSSSSES) the composition is skewed to low complexity. Positions 1 to 23 (MGNSKSKSNPSSSSESQKGAPTV) are disordered. Residue Gly2 is the site of N-myristoyl glycine; by host attachment. The RING-type; atypical zinc-finger motif lies at 40 to 76 (CKCCWFADKNLIKCSDHYLCLRCLNVMLKNSDLCNIC). Residues 90 to 93 (PSAP) carry the PTAP/PSAP motif motif.

It belongs to the arenaviridae Z protein family. Interacts with protein NP; this interaction probably directs the encapsidated genome to budding sites. Interacts (via RING domain) with polymerase L; this interaction inhibits viral transcription and replication, Z partially blocks the product exit tunnel for the releasing nascent RNA product. Interacts with the glycoprotein complex; this interaction plays a role in virion budding. Interacts with host eIF4E; this interaction results in eIF4E reduced affinity for its substrate, the 5'-m7 G cap structure. Interacts (via late-budding domain) with host TSG101; this interaction is essential for budding and release of viral particles. Interacts with host RPLP0; this interaction may serve to load ribosome-like particles inside the virion. Interacts with host PML; this interaction induces PML bodies redistribution in the cytoplasm upon viral infection. Post-translationally, myristoylation is required for the role of RING finger protein Z in assembly and budding.

The protein resides in the virion. It is found in the host cytoplasm. Its subcellular location is the host perinuclear region. The protein localises to the host cell membrane. Functionally, plays a crucial role in virion assembly and budding. Expressed late in the virus life cycle, it acts as an inhibitor of viral transcription and RNA synthesis by interacting with the viral polymerase L. Presumably recruits the NP encapsidated genome to cellular membranes at budding sites via direct interaction with NP. Plays critical roles in the final steps of viral release by interacting with host TSG101, a member of the vacuolar protein-sorting pathway and using other cellular host proteins involved in vesicle formation pathway. The budding of the virus progeny occurs after association of protein Z with the viral glycoprotein complex SSP-GP1-GP2 at the cell periphery, step that requires myristoylation of protein Z. Also selectively represses protein production by associating with host eIF4E. In cell-based minigenome assay, has an inhibitory effect on the ribonucleoprotein machinery (vRNP), which is responsible for the replication and transcription of the viral genome. The protein is RING finger protein Z of Guanarito mammarenavirus (isolate Human/Venezuela/NH-95551/1990) (GTOV).